Here is a 184-residue protein sequence, read N- to C-terminus: Large ribosomal subunit protein uL6 (184 aa).

Belongs to the universal ribosomal protein uL6 family. As to quaternary structure, part of the 50S ribosomal subunit.

Its function is as follows. This protein binds to the 23S rRNA, and is important in its secondary structure. It is located near the subunit interface in the base of the L7/L12 stalk, and near the tRNA binding site of the peptidyltransferase center. This is Large ribosomal subunit protein uL6 from Pyrococcus abyssi (strain GE5 / Orsay).